The primary structure comprises 502 residues: Probable malate:quinone oxidoreductase (502 aa).

It belongs to the MQO family. It depends on FAD as a cofactor.

It carries out the reaction (S)-malate + a quinone = a quinol + oxaloacetate. It participates in carbohydrate metabolism; tricarboxylic acid cycle; oxaloacetate from (S)-malate (quinone route): step 1/1. The chain is Probable malate:quinone oxidoreductase from Synechococcus sp. (strain CC9605).